A 134-amino-acid polypeptide reads, in one-letter code: Putative membrane protein insertion efficiency factor (134 aa).

It belongs to the UPF0161 family.

Its subcellular location is the cell inner membrane. Its function is as follows. Could be involved in insertion of integral membrane proteins into the membrane. The polypeptide is Putative membrane protein insertion efficiency factor (Rhizobium etli (strain ATCC 51251 / DSM 11541 / JCM 21823 / NBRC 15573 / CFN 42)).